A 379-amino-acid chain; its full sequence is Cobalt-precorrin-5B C(1)-methyltransferase (379 aa).

The protein belongs to the CbiD family.

It catalyses the reaction Co-precorrin-5B + S-adenosyl-L-methionine = Co-precorrin-6A + S-adenosyl-L-homocysteine. It functions in the pathway cofactor biosynthesis; adenosylcobalamin biosynthesis; cob(II)yrinate a,c-diamide from sirohydrochlorin (anaerobic route): step 6/10. Its function is as follows. Catalyzes the methylation of C-1 in cobalt-precorrin-5B to form cobalt-precorrin-6A. In Edwardsiella ictaluri (strain 93-146), this protein is Cobalt-precorrin-5B C(1)-methyltransferase.